A 339-amino-acid chain; its full sequence is Transcription factor IIIA (339 aa).

9 C2H2-type zinc fingers span residues 12 to 36, 42 to 66, 72 to 97, 104 to 128, 134 to 158, 161 to 187, 190 to 212, 219 to 244, and 250 to 274; these read FICSFPDCNATYNKNRKLQAHLCKH, FPCTYEGCEKGFVTLHHLNRHVLSH, CKCETENCNLAFTTASNMRLHFKRAH, YVCYFADCGQQFRKHNQLKIHQYIH, FKCSHEGCDKCYASPSRLKRHEKTH, YPCRKDSTCPFVGKTWSDYMKHAAELH, VTCSICNRTFKRKSFLKEHKKIH, YRCPRENCDRTYTTKFNLKSHILTFH, and FVCEHEGCGKTFAMKQSLDRHFNTH. A disordered region spans residues 271–339; that stretch reads FNTHDPEKKK…LPVLENLTLK (69 aa). Basic residues predominate over residues 299 to 309; the sequence is KPKKSKKKKKP. Residues 311 to 323 show a composition bias toward polar residues; it reads QTPAMESQEQQPD.

It localises to the nucleus. Its function is as follows. Involved in ribosomal large subunit biogenesis. Interacts with the internal control region (ICR) of approximately 50 bases within the 5S RNA genes, is required for correct transcription of these genes by RNA polymerase III. Also binds the transcribed 5S RNA's. The chain is Transcription factor IIIA (gtf3a) from Anaxyrus americanus (American toad).